The sequence spans 337 residues: Inositol 2-dehydrogenase (337 aa).

Belongs to the Gfo/Idh/MocA family. Homotetramer.

The enzyme catalyses myo-inositol + NAD(+) = scyllo-inosose + NADH + H(+). Functionally, involved in the oxidation of myo-inositol (MI) to 2-keto-myo-inositol (2KMI or 2-inosose). This chain is Inositol 2-dehydrogenase, found in Corynebacterium glutamicum (strain R).